We begin with the raw amino-acid sequence, 398 residues long: Trans-2-enoyl-CoA reductase [NADH] (398 aa).

Residues 47–52 (GASSGF), 74–75 (YE), 111–112 (DA), and 139–140 (LA) contribute to the NAD(+) site. Tyr-225 is a binding site for substrate. Tyr-235 acts as the Proton donor in catalysis. NAD(+) is bound by residues Lys-244 and 274 to 276 (LVT).

The protein belongs to the TER reductase family. As to quaternary structure, monomer.

It catalyses the reaction a 2,3-saturated acyl-CoA + NAD(+) = a (2E)-enoyl-CoA + NADH + H(+). It participates in lipid metabolism; fatty acid biosynthesis. Functionally, involved in the fatty acid synthesis (FAS II). Catalyzes the reduction of the carbon-carbon double bond of crotonyl-CoA to yield butyryl-CoA. In Clostridium acetobutylicum (strain ATCC 824 / DSM 792 / JCM 1419 / IAM 19013 / LMG 5710 / NBRC 13948 / NRRL B-527 / VKM B-1787 / 2291 / W), this protein is Trans-2-enoyl-CoA reductase [NADH].